We begin with the raw amino-acid sequence, 402 residues long: Multidrug resistance protein MdtH (402 aa).

At 1–12 (MSRVSQARNLGK) the chain is on the cytoplasmic side. Residues 13-33 (YFLLIDNMLVVLGFFVVFPLI) traverse the membrane as a helical segment. Over 34-98 (SIRFVDQMGW…GFATMGIAHE (65 aa)) the chain is Periplasmic. A helical transmembrane segment spans residues 99–116 (PWLLWFSCLLSGLGGTLF). Residues 117-138 (DPPRSALVVKLIRPQQRGRFFS) are Cytoplasmic-facing. A helical membrane pass occupies residues 139–159 (LLMMQDSASAVIGALLGSWLL). The Periplasmic segment spans residues 160 to 164 (QYDFR). Residues 165-185 (LVCATGAVLFVLCAAFNAWLL) traverse the membrane as a helical segment. The Cytoplasmic segment spans residues 186-213 (PAWKLSTVRTPVREGMTRVMRDKRFVTY). The chain crosses the membrane as a helical span at residues 214-234 (VLTLAGYYMLAVQVMLMLPIM). Topologically, residues 235 to 243 (VNDVAGAPS) are periplasmic. Residues 244–264 (AVKWMYAIEACLSLTLLYPIA) form a helical membrane-spanning segment. Topologically, residues 265-276 (RWSEKHFRLEHR) are cytoplasmic. A helical membrane pass occupies residues 277–297 (LMAGLLIMSLSMMPVGMVSGL). Residues 298–299 (QQ) are Periplasmic-facing. A helical membrane pass occupies residues 300 to 320 (LFTLICLFYIGSIIAEPARET). The Cytoplasmic segment spans residues 321–339 (LSASLADARARGSYMGFSR). The chain crosses the membrane as a helical span at residues 340–360 (LGLAIGGAIGYIGGGWLFDLG). Over 361–367 (KSAHQPE) the chain is Periplasmic. A helical membrane pass occupies residues 368 to 388 (LPWMMLGIIGIFTFLALGWQF). The Cytoplasmic portion of the chain corresponds to 389-402 (SQKRAARRLLERDA).

It belongs to the major facilitator superfamily. DHA1 family. MdtH (TC 2.A.1.2.21) subfamily.

It localises to the cell inner membrane. This chain is Multidrug resistance protein MdtH, found in Shigella flexneri.